Reading from the N-terminus, the 123-residue chain is Guanine nucleotide exchange factor MSS4 (123 aa).

Methionine 1 carries the N-acetylmethionine modification. The MSS4 domain maps to 9-123 (ELVSAEGRNR…YVALERVSHE (115 aa)). Residues cysteine 23, cysteine 26, cysteine 94, and cysteine 97 each contribute to the Zn(2+) site.

Belongs to the DSS4/MSS4 family. As to quaternary structure, interacts with RAB8A. As to expression, ubiquitous.

Its function is as follows. Guanine-nucleotide-releasing protein that acts on members of the SEC4/YPT1/RAB subfamily. Stimulates GDP release from both YPT1, RAB3A and RAB10, but is less active on these proteins than on the SEC4 protein. Might play a general role in vesicular transport. The polypeptide is Guanine nucleotide exchange factor MSS4 (Rabif) (Rattus norvegicus (Rat)).